Consider the following 155-residue polypeptide: Transcriptional repressor NrdR (155 aa).

A compositionally biased stretch (polar residues) spans 1-11 (MECPNCHQNAS). The segment at 1–22 (MECPNCHQNASRVIDSRPSDEN) is disordered. Residues 3–34 (CPNCHQNASRVIDSRPSDENRAIRRRRECENC) fold into a zinc finger. One can recognise an ATP-cone domain in the interval 49-139 (LLVIKNDGTR…IYREFKDMSS (91 aa)).

Belongs to the NrdR family. Zn(2+) serves as cofactor.

Functionally, negatively regulates transcription of bacterial ribonucleotide reductase nrd genes and operons by binding to NrdR-boxes. In Lactobacillus helveticus (strain DPC 4571), this protein is Transcriptional repressor NrdR.